A 91-amino-acid polypeptide reads, in one-letter code: UPF0250 protein NGK_1021 (91 aa).

It belongs to the UPF0250 family.

The chain is UPF0250 protein NGK_1021 from Neisseria gonorrhoeae (strain NCCP11945).